Reading from the N-terminus, the 118-residue chain is DNA polymerase epsilon subunit 4 (118 aa).

2 stretches are compositionally biased toward low complexity: residues 1–11 (MAAAAAAGSGT) and 19–35 (GGEAAASQAQAPTSAPG). The disordered stretch occupies residues 1-37 (MAAAAAAGSGTPREEEAPGGEAAASQAQAPTSAPGGV). N-acetylalanine is present on Ala-2. At Thr-11 the chain carries Phosphothreonine. Ser-25 is modified (phosphoserine).

As to quaternary structure, component of the DNA polymerase epsilon complex consisting of four subunits: the catalytic subunit POLE and the accessory subunits POLE2, POLE3 and POLE4. Interaction with POLE3 is a prerequisite for further binding with POLE and POLE2.

It localises to the nucleus. In terms of biological role, accessory component of the DNA polymerase epsilon complex. Participates in DNA repair and in chromosomal DNA replication. This chain is DNA polymerase epsilon subunit 4 (Pole4), found in Mus musculus (Mouse).